The sequence spans 293 residues: Shikimate dehydrogenase (NADP(+)) (293 aa).

Shikimate-binding positions include Ser20–Thr22 and Thr72. The active-site Proton acceptor is Lys76. Positions 97 and 112 each coordinate shikimate. NADP(+)-binding positions include Gly136–Ala140 and Ile230. Residue Tyr232 coordinates shikimate. Gly253 is an NADP(+) binding site.

This sequence belongs to the shikimate dehydrogenase family. In terms of assembly, homodimer.

The catalysed reaction is shikimate + NADP(+) = 3-dehydroshikimate + NADPH + H(+). It functions in the pathway metabolic intermediate biosynthesis; chorismate biosynthesis; chorismate from D-erythrose 4-phosphate and phosphoenolpyruvate: step 4/7. Involved in the biosynthesis of the chorismate, which leads to the biosynthesis of aromatic amino acids. Catalyzes the reversible NADPH linked reduction of 3-dehydroshikimate (DHSA) to yield shikimate (SA). The sequence is that of Shikimate dehydrogenase (NADP(+)) from Pseudarthrobacter chlorophenolicus (strain ATCC 700700 / DSM 12829 / CIP 107037 / JCM 12360 / KCTC 9906 / NCIMB 13794 / A6) (Arthrobacter chlorophenolicus).